The sequence spans 160 residues: NADH-quinone oxidoreductase subunit B (160 aa).

Residues cysteine 37, cysteine 38, cysteine 102, and cysteine 132 each coordinate [4Fe-4S] cluster.

This sequence belongs to the complex I 20 kDa subunit family. NDH-1 is composed of 14 different subunits. Subunits NuoB, C, D, E, F, and G constitute the peripheral sector of the complex. It depends on [4Fe-4S] cluster as a cofactor.

It is found in the cell inner membrane. It carries out the reaction a quinone + NADH + 5 H(+)(in) = a quinol + NAD(+) + 4 H(+)(out). Functionally, NDH-1 shuttles electrons from NADH, via FMN and iron-sulfur (Fe-S) centers, to quinones in the respiratory chain. Couples the redox reaction to proton translocation (for every two electrons transferred, four hydrogen ions are translocated across the cytoplasmic membrane), and thus conserves the redox energy in a proton gradient. The sequence is that of NADH-quinone oxidoreductase subunit B from Neisseria meningitidis serogroup A / serotype 4A (strain DSM 15465 / Z2491).